Reading from the N-terminus, the 505-residue chain is 2,3-bisphosphoglycerate-independent phosphoglycerate mutase (505 aa).

2 residues coordinate Mn(2+): Asp-13 and Ser-63. Residue Ser-63 is the Phosphoserine intermediate of the active site. Substrate is bound by residues His-124, Arg-153–Asp-154, Arg-183, Arg-189, Arg-254–Arg-257, and Lys-330. Asp-396, His-400, Asp-437, His-438, and His-456 together coordinate Mn(2+).

It belongs to the BPG-independent phosphoglycerate mutase family. Monomer. It depends on Mn(2+) as a cofactor.

It catalyses the reaction (2R)-2-phosphoglycerate = (2R)-3-phosphoglycerate. It functions in the pathway carbohydrate degradation; glycolysis; pyruvate from D-glyceraldehyde 3-phosphate: step 3/5. Functionally, catalyzes the interconversion of 2-phosphoglycerate and 3-phosphoglycerate. This is 2,3-bisphosphoglycerate-independent phosphoglycerate mutase from Roseobacter denitrificans (strain ATCC 33942 / OCh 114) (Erythrobacter sp. (strain OCh 114)).